The primary structure comprises 372 residues: Ephrin type-A receptor 8 (372 aa).

One can recognise a Protein kinase domain in the interval I2 to V263. ATP is bound by residues I8–V16 and K34. Catalysis depends on D127, which acts as the Proton acceptor. Y206 is subject to Phosphotyrosine; by autocatalysis. The SAM domain occupies N297–L372. Residues R370–L372 carry the PDZ-binding motif.

In terms of assembly, heterotetramer upon binding of the ligand. The heterotetramer is composed of an ephrin dimer and a receptor dimer. Oligomerization is probably required to induce biological responses. May also form heterodimers with other ephrin receptors. Interacts with FYN; possible downstream effector of EPHA8 in regulation of cell adhesion. Interacts with PIK3CG; regulates integrin-mediated cell adhesion to substrate. Interacts with TIAM1; regulates clathrin-mediated endocytosis of EPHA8. Interacts with ANKS1A and ANKS1B; EPHA8 kinase activity-independent but stimulated by EPHA8 ubiquitination. Phosphorylated. Phosphorylation is stimulated upon binding of its ligands including EFNA2, EFNA3 and EFNA5. Autophosphorylation on Tyr-206 modulates tyrosine kinase activity. Post-translationally, ubiquitinated. Ubiquitination by CBL regulates the receptor stability and activity through proteasomal degradation. ANKS1A prevents ubiquitination and degradation. As to expression, most abundant in brain.

It is found in the cell membrane. The protein localises to the cell projection. The protein resides in the early endosome membrane. The catalysed reaction is L-tyrosyl-[protein] + ATP = O-phospho-L-tyrosyl-[protein] + ADP + H(+). Its function is as follows. Receptor tyrosine kinase which binds promiscuously GPI-anchored ephrin-A family ligands residing on adjacent cells, leading to contact-dependent bidirectional signaling into neighboring cells. The signaling pathway downstream of the receptor is referred to as forward signaling while the signaling pathway downstream of the ephrin ligand is referred to as reverse signaling. The GPI-anchored ephrin-A EFNA2, EFNA3, and EFNA5 are able to activate EPHA8 through phosphorylation. With EFNA5 may regulate integrin-mediated cell adhesion and migration on fibronectin substrate but also neurite outgrowth. During development of the nervous system also plays a role in axon guidance. Downstream effectors of the EPHA8 signaling pathway include FYN which promotes cell adhesion upon activation by EPHA8 and the MAP kinases in the stimulation of neurite outgrowth. In Rattus norvegicus (Rat), this protein is Ephrin type-A receptor 8 (Epha8).